We begin with the raw amino-acid sequence, 200 residues long: ATP synthase subunit s, mitochondrial (200 aa).

The N-terminal 25 residues, 1–25 (MMMFGKISRQLCSLKKIPWSCDSRY), are a transit peptide targeting the mitochondrion. The interval 1 to 61 (MMMFGKISRQ…SEWLLRCGAK (61 aa)) is N-terminal domain. Residue G59 participates in Mg(2+) binding. LRR repeat units lie at residues 62 to 87 (VRYC…RYKI), 88 to 116 (QAID…KITL), 117 to 141 (CKCH…KSLL), and 142 to 173 (ELEI…LSDL). T93 contributes to the Mg(2+) binding site.

The protein belongs to the ATP synthase subunit s family. In terms of assembly, homotetramer. Associates with ATP synthase.

The protein localises to the mitochondrion. It is found in the mitochondrion inner membrane. Its function is as follows. Involved in regulation of mitochondrial membrane ATP synthase. Necessary for H(+) conduction of ATP synthase. Facilitates energy-driven catalysis of ATP synthesis by blocking a proton leak through an alternative proton exit pathway. In Mus musculus (Mouse), this protein is ATP synthase subunit s, mitochondrial (Dmac2l).